The chain runs to 262 residues: [LysW]-aminoadipate/[LysW]-glutamate kinase (262 aa).

Residues 35–36, Arg-62, and Asn-167 contribute to the substrate site; that span reads GG.

This sequence belongs to the acetylglutamate kinase family. LysZ subfamily.

It is found in the cytoplasm. The catalysed reaction is [amino-group carrier protein]-C-terminal-N-(1,4-dicarboxybutan-1-yl)-L-glutamine + ATP = [amino-group carrier protein]-C-terminal-N-(1-carboxy-5-phosphooxy-5-oxopentan-1-yl)-L-glutamine + ADP. It catalyses the reaction [amino-group carrier protein]-C-terminal-gamma-(L-glutamyl)-L-glutamate + ATP = [amino-group carrier protein]-C-terminal-gamma-(5-phospho-L-glutamyl)-L-glutamate + ADP. Its pathway is amino-acid biosynthesis; L-lysine biosynthesis via AAA pathway; L-lysine from L-alpha-aminoadipate (Thermus route): step 2/5. It functions in the pathway amino-acid biosynthesis; L-arginine biosynthesis. Functionally, involved in both the arginine and lysine biosynthetic pathways. Phosphorylates the LysW-bound precursors glutamate (for arginine biosynthesis), respectively alpha-aminoadipate (for lysine biosynthesis). In Metallosphaera sedula (strain ATCC 51363 / DSM 5348 / JCM 9185 / NBRC 15509 / TH2), this protein is [LysW]-aminoadipate/[LysW]-glutamate kinase.